The following is a 334-amino-acid chain: Ornithine carbamoyltransferase (334 aa).

Carbamoyl phosphate contacts are provided by residues 56 to 59 (STRT), Gln-83, Arg-107, and 134 to 137 (HPTQ). L-ornithine-binding positions include Asn-168, Asp-232, and 236–237 (SM). Residues 274–275 (CL) and Arg-320 each bind carbamoyl phosphate.

This sequence belongs to the aspartate/ornithine carbamoyltransferase superfamily. OTCase family.

Its subcellular location is the cytoplasm. It carries out the reaction carbamoyl phosphate + L-ornithine = L-citrulline + phosphate + H(+). The protein operates within amino-acid biosynthesis; L-arginine biosynthesis; L-arginine from L-ornithine and carbamoyl phosphate: step 1/3. In terms of biological role, reversibly catalyzes the transfer of the carbamoyl group from carbamoyl phosphate (CP) to the N(epsilon) atom of ornithine (ORN) to produce L-citrulline. The chain is Ornithine carbamoyltransferase from Escherichia coli O157:H7.